We begin with the raw amino-acid sequence, 450 residues long: tRNA modification GTPase MnmE (450 aa).

Arg-20, Glu-78, and Lys-117 together coordinate (6S)-5-formyl-5,6,7,8-tetrahydrofolate. The 162-residue stretch at 211–372 folds into the TrmE-type G domain; it reads GLRMVIVGKP…LEESIYRETQ (162 aa). Asn-221 is a binding site for K(+). Residues 221-226, 240-246, and 265-268 each bind GTP; these read NVGKST, TDIPGTT, and DTAG. Residue Ser-225 participates in Mg(2+) binding. K(+) is bound by residues Thr-240, Ile-242, and Thr-245. Thr-246 serves as a coordination point for Mg(2+). Lys-450 is a (6S)-5-formyl-5,6,7,8-tetrahydrofolate binding site.

Belongs to the TRAFAC class TrmE-Era-EngA-EngB-Septin-like GTPase superfamily. TrmE GTPase family. As to quaternary structure, homodimer. Heterotetramer of two MnmE and two MnmG subunits. The cofactor is K(+).

It localises to the cytoplasm. Its function is as follows. Exhibits a very high intrinsic GTPase hydrolysis rate. Involved in the addition of a carboxymethylaminomethyl (cmnm) group at the wobble position (U34) of certain tRNAs, forming tRNA-cmnm(5)s(2)U34. The protein is tRNA modification GTPase MnmE of Thermotoga sp. (strain RQ2).